The primary structure comprises 353 residues: Protein RecA (353 aa).

Position 67-74 (67-74 (GPESSGKT)) interacts with ATP.

This sequence belongs to the RecA family.

It is found in the cytoplasm. Functionally, can catalyze the hydrolysis of ATP in the presence of single-stranded DNA, the ATP-dependent uptake of single-stranded DNA by duplex DNA, and the ATP-dependent hybridization of homologous single-stranded DNAs. It interacts with LexA causing its activation and leading to its autocatalytic cleavage. This is Protein RecA from Chlamydia pneumoniae (Chlamydophila pneumoniae).